The primary structure comprises 372 residues: MKSSGAGAAFAGASVADAVPLAPLTTLRVGPTARRLITCASSEQVIATLRRLDTERLAGQRDPVLVFAGGSNLVISDALSDLTAVRLANDGITVEGNLVRAQAGAVWDDVVLTAIEHGLGGLECLSGIPGSAGATPIQNVGAYGAEVSDTLTRVRVLDRGSGQVRWVPGTELEFGYRTSVFKRRADDGLEIPSVVLEVEFALDASGRSAPVRYGELAAELEVPVGERADPRAVREAVLALRARKGMVLDAADHDTWSVGSFFTNPVVAPDVYERLAGSVDGPVPHYPAPGGVKLAAGWLVERAGFGKGYPVPDPGGPEAPCRLSTKHALALTNRGTARSDDVIALARTIRDGVRSVFGITLVPEPVLLGCRL.

Residues 29 to 205 form the FAD-binding PCMH-type domain; that stretch reads VGPTARRLIT…LEVEFALDAS (177 aa). Arginine 177 is an active-site residue. The active-site Proton donor is the serine 260. Residue glutamate 364 is part of the active site.

It belongs to the MurB family. Requires FAD as cofactor.

It is found in the cytoplasm. It carries out the reaction UDP-N-acetyl-alpha-D-muramate + NADP(+) = UDP-N-acetyl-3-O-(1-carboxyvinyl)-alpha-D-glucosamine + NADPH + H(+). The protein operates within cell wall biogenesis; peptidoglycan biosynthesis. In terms of biological role, cell wall formation. The protein is UDP-N-acetylenolpyruvoylglucosamine reductase of Mycobacterium avium (strain 104).